An 87-amino-acid chain; its full sequence is Small ribosomal subunit protein bS21 (87 aa).

Residues 35–52 are compositionally biased toward basic and acidic residues; sequence HYEKPSEKKAREKAEAVR. A disordered region spans residues 35–87; sequence HYEKPSEKKAREKAEAVRRARKLARKKLQREGLLPSKPKPAFGADRRPSAAAR. Basic residues predominate over residues 53–62; the sequence is RARKLARKKL. Over residues 78–87 the composition is skewed to basic and acidic residues; it reads ADRRPSAAAR.

This Rhodopseudomonas palustris (strain ATCC BAA-98 / CGA009) protein is Small ribosomal subunit protein bS21.